A 235-amino-acid polypeptide reads, in one-letter code: MSVHIEAKQGEIAESILLPGDPLRAKYIAETFLEDVTCYNNVRGMLGFTGTYKGKRVSVQGTGMGVPSISIYVNELIQSYGVKNLIRVGTCGAIQKDVKVRDVIIAMTACTDSNMNRLTFPGFDFAPTANFDLLKKAYDAGTEKGLHVRVGNVLTADVFYRESMDMVKKLGDYGVLAVEMETTALYTLAAKYGVNALSVLTVSDHIFTGEETTSEERQTTFNEMIEIALDAAIQQ.

H4 is an a purine D-ribonucleoside binding site. Phosphate contacts are provided by residues G20, R24, R43, and 87–90 (RVGT). Residues E162, 179 to 181 (EME), and 203 to 204 (SD) contribute to the a purine D-ribonucleoside site. Catalysis depends on D204, which acts as the Proton donor.

It belongs to the PNP/UDP phosphorylase family. In terms of assembly, homohexamer; trimer of homodimers.

The enzyme catalyses a purine D-ribonucleoside + phosphate = a purine nucleobase + alpha-D-ribose 1-phosphate. It catalyses the reaction a purine 2'-deoxy-D-ribonucleoside + phosphate = a purine nucleobase + 2-deoxy-alpha-D-ribose 1-phosphate. Functionally, catalyzes the reversible phosphorolytic breakdown of the N-glycosidic bond in the beta-(deoxy)ribonucleoside molecules, with the formation of the corresponding free purine bases and pentose-1-phosphate. The chain is Purine nucleoside phosphorylase DeoD-type from Bacillus cereus (strain B4264).